The chain runs to 960 residues: Endoplasmic reticulum aminopeptidase 2 (960 aa).

The Cytoplasmic portion of the chain corresponds to 1–20 (MFHSSAMVNSHRKPMFNIHR). The chain crosses the membrane as a helical; Signal-anchor for type II membrane protein span at residues 21–40 (GFYCLTAILPQICICSQFSV). Residues 41 to 960 (PSSYHFTEDP…TLRTWLMVNT (920 aa)) are Lumenal-facing. 2 N-linked (GlcNAc...) asparagine glycosylation sites follow: Asn85 and Asn119. Glu200 provides a ligand contact to substrate. Asn219 carries an N-linked (GlcNAc...) asparagine glycan. Position 334–338 (334–338 (GAMEN)) interacts with substrate. His370 is a Zn(2+) binding site. Glu371 acts as the Proton acceptor in catalysis. The Zn(2+) site is built by His374 and Glu393. N-linked (GlcNAc...) asparagine glycosylation is present at Asn405. Cysteines 421 and 460 form a disulfide. An N-linked (GlcNAc...) asparagine glycan is attached at Asn650. An intrachain disulfide couples Cys759 to Cys766.

It belongs to the peptidase M1 family. In terms of assembly, heterodimer with ERAP1. The cofactor is Zn(2+). N-glycosylated. As to expression, ubiquitously expressed. Highly expressed in spleen and leukocytes.

Its subcellular location is the endoplasmic reticulum membrane. Aminopeptidase that plays a central role in peptide trimming, a step required for the generation of most HLA class I-binding peptides. Peptide trimming is essential to customize longer precursor peptides to fit them to the correct length required for presentation on MHC class I molecules. Preferentially hydrolyzes the basic residues Arg and Lys. The sequence is that of Endoplasmic reticulum aminopeptidase 2 (ERAP2) from Homo sapiens (Human).